Reading from the N-terminus, the 1150-residue chain is uncharacterized protein (1150 aa).

The protein belongs to the TMEM1 family.

This is an uncharacterized protein from Schizosaccharomyces pombe (strain 972 / ATCC 24843) (Fission yeast).